Here is a 706-residue protein sequence, read N- to C-terminus: Centrosomal protein kizuna (706 aa).

Positions 63 to 113 (QRAKTRNLELLGNVENLASKLKEFSIDCSRLLQKRMEYKNHITRLKKDRRK) form a coiled coil. Basic residues predominate over residues 105-116 (TRLKKDRRKMGS). 5 disordered regions span residues 105–184 (TRLK…LCMH), 215–347 (VREK…ASRG), 571–603 (EIKP…QSPV), 620–665 (SVAQ…KTKP), and 677–706 (ESDD…DFYD). Basic and acidic residues predominate over residues 118–127 (GKSEADEHPS). Composition is skewed to polar residues over residues 128-156 (RLST…NDGA) and 164-180 (HTEQ…SQSG). Over residues 215–251 (VREKQMESDWDISQRAREQQRQEELKSPHTTLKEAEV) the composition is skewed to basic and acidic residues. The span at 272–283 (TRSPSPDTTDPS) shows a compositional bias: low complexity. Residues 293-304 (GEDEEESAEDKD) are compositionally biased toward acidic residues. The span at 308–320 (PINQNHSDYTSNI) shows a compositional bias: polar residues. Residues 586–598 (EEQEIQSAEEDSA) are compositionally biased toward acidic residues. Basic and acidic residues predominate over residues 638-648 (PDAHKLEKPEV).

The protein belongs to the kizuna family.

It localises to the cytoplasm. The protein resides in the cytoskeleton. Its subcellular location is the microtubule organizing center. It is found in the centrosome. The protein localises to the cilium basal body. Its function is as follows. Centrosomal protein required for establishing a robust mitotic centrosome architecture that can endure the forces that converge on the centrosomes during spindle formation. Required for stabilizing the expanded pericentriolar material around the centriole. This is Centrosomal protein kizuna (kiz) from Danio rerio (Zebrafish).